Here is an 844-residue protein sequence, read N- to C-terminus: DNA mismatch repair protein MutS (844 aa).

602 to 609 provides a ligand contact to ATP; that stretch reads GPNMSGKS.

Belongs to the DNA mismatch repair MutS family.

In terms of biological role, this protein is involved in the repair of mismatches in DNA. It is possible that it carries out the mismatch recognition step. This protein has a weak ATPase activity. In Streptococcus pneumoniae serotype 19F (strain G54), this protein is DNA mismatch repair protein MutS.